The sequence spans 336 residues: Holliday junction branch migration complex subunit RuvB (336 aa).

The interval 4–184 (ADRLVAPGSI…FGIVQRLEFY (181 aa)) is large ATPase domain (RuvB-L). ATP contacts are provided by residues isoleucine 23, arginine 24, glycine 65, lysine 68, threonine 69, threonine 70, 131–133 (EDY), arginine 174, tyrosine 184, and arginine 221. Threonine 69 contacts Mg(2+). Positions 185-255 (QVADLQHIVS…VASQALDMLN (71 aa)) are small ATPAse domain (RuvB-S). Residues 258 to 336 (AEGFDYMDRK…HFGITPPQMP (79 aa)) form a head domain (RuvB-H) region. Residues arginine 294, arginine 313, and arginine 318 each contribute to the DNA site.

Belongs to the RuvB family. As to quaternary structure, homohexamer. Forms an RuvA(8)-RuvB(12)-Holliday junction (HJ) complex. HJ DNA is sandwiched between 2 RuvA tetramers; dsDNA enters through RuvA and exits via RuvB. An RuvB hexamer assembles on each DNA strand where it exits the tetramer. Each RuvB hexamer is contacted by two RuvA subunits (via domain III) on 2 adjacent RuvB subunits; this complex drives branch migration. In the full resolvosome a probable DNA-RuvA(4)-RuvB(12)-RuvC(2) complex forms which resolves the HJ.

The protein resides in the cytoplasm. It carries out the reaction ATP + H2O = ADP + phosphate + H(+). Functionally, the RuvA-RuvB-RuvC complex processes Holliday junction (HJ) DNA during genetic recombination and DNA repair, while the RuvA-RuvB complex plays an important role in the rescue of blocked DNA replication forks via replication fork reversal (RFR). RuvA specifically binds to HJ cruciform DNA, conferring on it an open structure. The RuvB hexamer acts as an ATP-dependent pump, pulling dsDNA into and through the RuvAB complex. RuvB forms 2 homohexamers on either side of HJ DNA bound by 1 or 2 RuvA tetramers; 4 subunits per hexamer contact DNA at a time. Coordinated motions by a converter formed by DNA-disengaged RuvB subunits stimulates ATP hydrolysis and nucleotide exchange. Immobilization of the converter enables RuvB to convert the ATP-contained energy into a lever motion, pulling 2 nucleotides of DNA out of the RuvA tetramer per ATP hydrolyzed, thus driving DNA branch migration. The RuvB motors rotate together with the DNA substrate, which together with the progressing nucleotide cycle form the mechanistic basis for DNA recombination by continuous HJ branch migration. Branch migration allows RuvC to scan DNA until it finds its consensus sequence, where it cleaves and resolves cruciform DNA. This Cronobacter sakazakii (strain ATCC BAA-894) (Enterobacter sakazakii) protein is Holliday junction branch migration complex subunit RuvB.